The sequence spans 501 residues: Bifunctional purine biosynthesis protein PurH (501 aa).

Residues 1–144 (MKKRALISVF…KNFKDVVVLS (144 aa)) enclose the MGS-like domain.

This sequence belongs to the PurH family.

It catalyses the reaction (6R)-10-formyltetrahydrofolate + 5-amino-1-(5-phospho-beta-D-ribosyl)imidazole-4-carboxamide = 5-formamido-1-(5-phospho-D-ribosyl)imidazole-4-carboxamide + (6S)-5,6,7,8-tetrahydrofolate. The enzyme catalyses IMP + H2O = 5-formamido-1-(5-phospho-D-ribosyl)imidazole-4-carboxamide. It participates in purine metabolism; IMP biosynthesis via de novo pathway; 5-formamido-1-(5-phospho-D-ribosyl)imidazole-4-carboxamide from 5-amino-1-(5-phospho-D-ribosyl)imidazole-4-carboxamide (10-formyl THF route): step 1/1. The protein operates within purine metabolism; IMP biosynthesis via de novo pathway; IMP from 5-formamido-1-(5-phospho-D-ribosyl)imidazole-4-carboxamide: step 1/1. The chain is Bifunctional purine biosynthesis protein PurH from Clostridium perfringens (strain SM101 / Type A).